Reading from the N-terminus, the 310-residue chain is MSSKHREDHLKRGSDVSPYESLFAGSVSGGVARAITAPLDTIKIRLQLQTKSHKHPHTQKVSALNVVKDLLKNEGVIALWKGNVPAEILYVMYGAVQFTTYSALSKSLSQMEKDYSIVMPSSVHSLLAGVGAGIASTLTTYPFDLLRTRLVANKKKNLLSMTGTFRKILHAEGISGLFAGIRPAMISVASTTGLMFWSYELAREFSSEYKHVPFIEGICGFVAGATSKGITFPLDTLRKRCQIYSEVYGTKYKSSLRIFMNIVSREGVLGLYRGYGVSILKTAPTSAISLWTYEYVISATRHYRLSKPLV.

Helical transmembrane passes span 16–32 (VSPY…GGVA), 88–104 (ILYV…YSAL), 117–141 (IVMP…LTTY), 173–197 (GISG…LMFW), 218–234 (ICGF…TFPL), and 274–291 (GYGV…ISLW). Solcar repeat units follow at residues 16–107 (VSPY…LSKS), 120–205 (PSSV…AREF), and 211–299 (HVPF…VISA).

Belongs to the mitochondrial carrier (TC 2.A.29) family.

It is found in the mitochondrion inner membrane. Mitochondrial transporter that mediates uptake of thiamine pyrophosphate (ThPP) into mitochondria. This chain is Mitochondrial thiamine pyrophosphate carrier 1 (TPC1), found in Lodderomyces elongisporus (strain ATCC 11503 / CBS 2605 / JCM 1781 / NBRC 1676 / NRRL YB-4239) (Yeast).